The chain runs to 327 residues: 2-oxoisovalerate dehydrogenase subunit beta (327 aa).

Residues Glu29, Leu58 to Glu60, Gln82, and Phe86 to Pro89 contribute to the thiamine diphosphate site. Residues Phe83–Phe86 and His129 contribute to the substrate site. The active-site Proton acceptor is the His129.

In terms of assembly, heterotetramer of two alpha and two beta chains. Directly associated with ODBA in the E1 complex. Thiamine diphosphate serves as cofactor.

The enzyme catalyses N(6)-[(R)-lipoyl]-L-lysyl-[protein] + 3-methyl-2-oxobutanoate + H(+) = N(6)-[(R)-S(8)-2-methylpropanoyldihydrolipoyl]-L-lysyl-[protein] + CO2. Its function is as follows. The branched-chain alpha-keto dehydrogenase complex catalyzes the overall conversion of alpha-keto acids to acyl-CoA and CO(2). It contains multiple copies of three enzymatic components: branched-chain alpha-keto acid decarboxylase (E1), lipoamide acyltransferase (E2) and lipoamide dehydrogenase (E3). This chain is 2-oxoisovalerate dehydrogenase subunit beta (bfmBAB), found in Bacillus subtilis (strain 168).